We begin with the raw amino-acid sequence, 141 residues long: Galactose-6-phosphate isomerase subunit LacA 1 (141 aa).

Belongs to the LacAB/RpiB family. In terms of assembly, heteromultimeric protein consisting of LacA and LacB.

The enzyme catalyses aldehydo-D-galactose 6-phosphate = keto-D-tagatose 6-phosphate. It functions in the pathway carbohydrate metabolism; D-galactose 6-phosphate degradation; D-tagatose 6-phosphate from D-galactose 6-phosphate: step 1/1. In Streptococcus pyogenes serotype M6 (strain ATCC BAA-946 / MGAS10394), this protein is Galactose-6-phosphate isomerase subunit LacA 1.